The sequence spans 295 residues: Ribose-phosphate pyrophosphokinase (295 aa).

ATP is bound by residues 46 to 48 (DGE) and 101 to 102 (RQ). Residues histidine 132 and aspartate 171 each coordinate Mg(2+). Residue lysine 194 is part of the active site. D-ribose 5-phosphate is bound by residues arginine 196 and aspartate 220.

The protein belongs to the ribose-phosphate pyrophosphokinase family. Class III (archaeal) subfamily. Mg(2+) serves as cofactor.

It localises to the cytoplasm. It catalyses the reaction D-ribose 5-phosphate + ATP = 5-phospho-alpha-D-ribose 1-diphosphate + AMP + H(+). It functions in the pathway metabolic intermediate biosynthesis; 5-phospho-alpha-D-ribose 1-diphosphate biosynthesis; 5-phospho-alpha-D-ribose 1-diphosphate from D-ribose 5-phosphate (route I): step 1/1. Functionally, involved in the biosynthesis of the central metabolite phospho-alpha-D-ribosyl-1-pyrophosphate (PRPP) via the transfer of pyrophosphoryl group from ATP to 1-hydroxyl of ribose-5-phosphate (Rib-5-P). The polypeptide is Ribose-phosphate pyrophosphokinase (Methanosarcina mazei (strain ATCC BAA-159 / DSM 3647 / Goe1 / Go1 / JCM 11833 / OCM 88) (Methanosarcina frisia)).